Consider the following 455-residue polypeptide: Bifunctional protein GlmU (455 aa).

The pyrophosphorylase stretch occupies residues 1 to 232; the sequence is MASTTGALIL…DPNLLGVNNP (232 aa). UDP-N-acetyl-alpha-D-glucosamine-binding positions include 10-13, Lys-24, Gln-75, and 80-81; these read LAAG and GT. Position 106 (Asp-106) interacts with Mg(2+). 4 residues coordinate UDP-N-acetyl-alpha-D-glucosamine: Gly-141, Glu-155, Asn-172, and Asn-230. Asn-230 provides a ligand contact to Mg(2+). A linker region spans residues 233–253; it reads AELIRSEALLRTRLVIGHIEG. Residues 254–455 form an N-acetyltransferase region; it reads GVLIHAPETV…QTNLPRKPKA (202 aa). Arg-336 and Lys-354 together coordinate UDP-N-acetyl-alpha-D-glucosamine. His-366 (proton acceptor) is an active-site residue. Tyr-369 and Asn-380 together coordinate UDP-N-acetyl-alpha-D-glucosamine. Acetyl-CoA contacts are provided by residues Ala-383, 389–390, Ser-408, Ala-426, and Arg-443; that span reads NY.

This sequence in the N-terminal section; belongs to the N-acetylglucosamine-1-phosphate uridyltransferase family. It in the C-terminal section; belongs to the transferase hexapeptide repeat family. As to quaternary structure, homotrimer. Mg(2+) serves as cofactor.

Its subcellular location is the cytoplasm. The catalysed reaction is alpha-D-glucosamine 1-phosphate + acetyl-CoA = N-acetyl-alpha-D-glucosamine 1-phosphate + CoA + H(+). It carries out the reaction N-acetyl-alpha-D-glucosamine 1-phosphate + UTP + H(+) = UDP-N-acetyl-alpha-D-glucosamine + diphosphate. It participates in nucleotide-sugar biosynthesis; UDP-N-acetyl-alpha-D-glucosamine biosynthesis; N-acetyl-alpha-D-glucosamine 1-phosphate from alpha-D-glucosamine 6-phosphate (route II): step 2/2. It functions in the pathway nucleotide-sugar biosynthesis; UDP-N-acetyl-alpha-D-glucosamine biosynthesis; UDP-N-acetyl-alpha-D-glucosamine from N-acetyl-alpha-D-glucosamine 1-phosphate: step 1/1. Its pathway is bacterial outer membrane biogenesis; LPS lipid A biosynthesis. Its function is as follows. Catalyzes the last two sequential reactions in the de novo biosynthetic pathway for UDP-N-acetylglucosamine (UDP-GlcNAc). The C-terminal domain catalyzes the transfer of acetyl group from acetyl coenzyme A to glucosamine-1-phosphate (GlcN-1-P) to produce N-acetylglucosamine-1-phosphate (GlcNAc-1-P), which is converted into UDP-GlcNAc by the transfer of uridine 5-monophosphate (from uridine 5-triphosphate), a reaction catalyzed by the N-terminal domain. The chain is Bifunctional protein GlmU from Nitratidesulfovibrio vulgaris (strain DP4) (Desulfovibrio vulgaris).